Consider the following 66-residue polypeptide: Sec-independent protein translocase protein TatA (66 aa).

Residues 1–21 (MSIGIWQIAIVVILVVLLFGR) traverse the membrane as a helical segment. The interval 43–66 (ATDITDEPEPKNVSENNQDSKDKE) is disordered. A compositionally biased stretch (basic and acidic residues) spans 50-66 (PEPKNVSENNQDSKDKE).

The protein belongs to the TatA/E family. As to quaternary structure, the Tat system comprises two distinct complexes: a TatABC complex, containing multiple copies of TatA, TatB and TatC subunits, and a separate TatA complex, containing only TatA subunits. Substrates initially bind to the TatABC complex, which probably triggers association of the separate TatA complex to form the active translocon.

It localises to the cell inner membrane. Functionally, part of the twin-arginine translocation (Tat) system that transports large folded proteins containing a characteristic twin-arginine motif in their signal peptide across membranes. TatA could form the protein-conducting channel of the Tat system. This chain is Sec-independent protein translocase protein TatA, found in Pelagibacter ubique (strain HTCC1062).